The primary structure comprises 192 residues: Inosine triphosphate pyrophosphatase (192 aa).

Residue Thr-10 to Lys-15 coordinates ITP. Glu-46 lines the Mg(2+) pocket. ITP contacts are provided by residues Lys-58, Asp-74–Thr-75, Lys-91, Phe-149–Asp-152, Lys-172, and His-177–Arg-178.

This sequence belongs to the HAM1 NTPase family. As to quaternary structure, homodimer. Requires Mg(2+) as cofactor. Mn(2+) is required as a cofactor.

It localises to the cytoplasm. Its subcellular location is the nucleus. The catalysed reaction is ITP + H2O = IMP + diphosphate + H(+). It carries out the reaction dITP + H2O = dIMP + diphosphate + H(+). It catalyses the reaction XTP + H2O = XMP + diphosphate + H(+). In terms of biological role, pyrophosphatase that hydrolyzes non-canonical purine nucleotides such as inosine triphosphate (ITP), deoxyinosine triphosphate (dITP) or xanthosine 5'-triphosphate (XTP) to their respective monophosphate derivatives. The enzyme does not distinguish between the deoxy- and ribose forms. Probably excludes non-canonical purines from RNA and DNA precursor pools, thus preventing their incorporation into RNA and DNA and avoiding chromosomal lesions. The polypeptide is Inosine triphosphate pyrophosphatase (Puccinia graminis f. sp. tritici (strain CRL 75-36-700-3 / race SCCL) (Black stem rust fungus)).